The primary structure comprises 325 residues: BES1/BZR1 homolog protein 4 (325 aa).

The disordered stretch occupies residues 1–21 (MTSGTRMPTWRERENNKRRER). A required for DNA-binding region spans residues 6–89 (RMPTWREREN…RMEIGGGSAT (84 aa)). Residue Thr169 is modified to Phosphothreonine. Residues 304–325 (ERIHEESGSDDLELTLGNSSTR) form a disordered region.

This sequence belongs to the BZR/LAT61 family. In terms of processing, phosphorylated. Phosphorylation increases protein degradation.

The sequence is that of BES1/BZR1 homolog protein 4 (BEH4) from Arabidopsis thaliana (Mouse-ear cress).